A 525-amino-acid chain; its full sequence is Lymphocyte activation gene 3 protein (525 aa).

The N-terminal stretch at 1 to 23 is a signal peptide; the sequence is MRQDLFLDLLLLQLLWEAPVVSS. The Extracellular segment spans residues 24-442; that stretch reads GPGKELSVVW…ISGDLKGGHL (419 aa). The region spanning 37–163 is the Ig-like V-type domain; that stretch reads GAPVHLPCSL…FSCSLRLRVG (127 aa). The segment at 37–246 is interaction with FGL1; the sequence is GAPVHLPCSL…LTYRDGFNVS (210 aa). An intrachain disulfide couples Cys44 to Cys156. Ig-like C2-type domains lie at 164-246, 258-341, and 345-412; these read QASM…FNVS, PVAP…AAVT, and ITVT…EGQK. N-linked (GlcNAc...) asparagine glycosylation is present at Asn184. An intrachain disulfide couples Cys185 to Cys235. Asn244 and Asn309 each carry an N-linked (GlcNAc...) asparagine glycan. Disulfide bonds link Cys276-Cys327 and Cys363-Cys405. The tract at residues 422–442 is connecting peptide; it reads ESSSGAWSAKRISGDLKGGHL. Residues 443–463 traverse the membrane as a helical segment; it reads FLSLILGALALFLLVTGAFGF. Over 464-525 the chain is Cytoplasmic; that stretch reads HLWRRQLLRR…PELEPESRQL (62 aa). Residues 486–525 form a disordered region; that stretch reads PVQSKIEELEREPETEMEPETEPDPEPQPEPELEPESRQL. The KIEELE motif signature appears at 490-495; it reads KIEELE. Over residues 490-499 the composition is skewed to basic and acidic residues; it reads KIEELEREPE. The tract at residues 493–522 is 15 X 2 AA tandem repeats of E-X; the sequence is ELEREPETEMEPETEPDPEPQPEPELEPES. Residues 500-519 are compositionally biased toward acidic residues; it reads TEMEPETEPDPEPQPEPELE.

This sequence belongs to the LAG3 family. Interacts with MHC class II (MHC-II); selectively recognizes stable complexes of peptide and MHC-II. Interacts with FGL1 (via the Fibrinogen C-terminal domain). Post-translationally, proteolytically cleaved by ADAM10 and ADAM17 within the connecting peptide region, leading to release of Secreted lymphocyte activation gene 3 protein (sLAG-3). ADAM10 mediates constitutive cleavage, but cleavage increases following T-cell activation, whereas shedding by ADAM17 is induced by TCR signaling in a PRKCQ-dependent manner.

The protein localises to the cell membrane. It localises to the secreted. Lymphocyte activation gene 3 protein: Inhibitory receptor on antigen activated T-cells. Delivers inhibitory signals upon binding to ligands, such as FGL1. FGL1 constitutes a major ligand of LAG3 and is responsible for LAG3 T-cell inhibitory function. Following TCR engagement, LAG3 associates with CD3-TCR in the immunological synapse and directly inhibits T-cell activation. May inhibit antigen-specific T-cell activation in synergy with PDCD1/PD-1, possibly by acting as a coreceptor for PDCD1/PD-1. Negatively regulates the proliferation, activation, effector function and homeostasis of both CD8(+) and CD4(+) T-cells. Also mediates immune tolerance: constitutively expressed on a subset of regulatory T-cells (Tregs) and contributes to their suppressive function. Also acts as a negative regulator of plasmacytoid dendritic cell (pDCs) activation. Binds MHC class II (MHC-II); the precise role of MHC-II-binding is however unclear. Its function is as follows. May function as a ligand for MHC class II (MHC-II) on antigen-presenting cells (APC), promoting APC activation/maturation and driving Th1 immune response. In Rattus norvegicus (Rat), this protein is Lymphocyte activation gene 3 protein (Lag3).